The following is a 291-amino-acid chain: N-acetylmannosamine kinase (291 aa).

ATP is bound by residues 5–12 (AIDIGGTK) and 132–139 (GVGGGVVS). Positions 156, 166, 168, and 173 each coordinate Zn(2+).

This sequence belongs to the ROK (NagC/XylR) family. NanK subfamily. Homodimer.

The enzyme catalyses an N-acyl-D-mannosamine + ATP = an N-acyl-D-mannosamine 6-phosphate + ADP + H(+). It participates in amino-sugar metabolism; N-acetylneuraminate degradation; D-fructose 6-phosphate from N-acetylneuraminate: step 2/5. Functionally, catalyzes the phosphorylation of N-acetylmannosamine (ManNAc) to ManNAc-6-P. The polypeptide is N-acetylmannosamine kinase (Escherichia coli (strain SE11)).